Consider the following 426-residue polypeptide: Tol-Pal system protein TolB (426 aa).

An N-terminal signal peptide occupies residues 1–25 (MSITPSLSRRTVMSLLAAGLSPAFA).

The protein belongs to the TolB family. As to quaternary structure, the Tol-Pal system is composed of five core proteins: the inner membrane proteins TolA, TolQ and TolR, the periplasmic protein TolB and the outer membrane protein Pal. They form a network linking the inner and outer membranes and the peptidoglycan layer.

It is found in the periplasm. In terms of biological role, part of the Tol-Pal system, which plays a role in outer membrane invagination during cell division and is important for maintaining outer membrane integrity. The chain is Tol-Pal system protein TolB from Polaromonas sp. (strain JS666 / ATCC BAA-500).